The following is a 184-amino-acid chain: uncharacterized protein (184 aa).

It to M.tuberculosis Rv0487.

This is an uncharacterized protein from Mycobacterium leprae (strain TN).